The chain runs to 491 residues: Probable cytosol aminopeptidase (491 aa).

Residues K263 and D268 each coordinate Mn(2+). K275 is an active-site residue. Mn(2+)-binding residues include D286, D345, and E347. The active site involves R349.

Belongs to the peptidase M17 family. Requires Mn(2+) as cofactor.

It is found in the cytoplasm. It carries out the reaction Release of an N-terminal amino acid, Xaa-|-Yaa-, in which Xaa is preferably Leu, but may be other amino acids including Pro although not Arg or Lys, and Yaa may be Pro. Amino acid amides and methyl esters are also readily hydrolyzed, but rates on arylamides are exceedingly low.. It catalyses the reaction Release of an N-terminal amino acid, preferentially leucine, but not glutamic or aspartic acids.. Its function is as follows. Presumably involved in the processing and regular turnover of intracellular proteins. Catalyzes the removal of unsubstituted N-terminal amino acids from various peptides. The sequence is that of Probable cytosol aminopeptidase from Haemophilus influenzae (strain PittGG).